A 90-amino-acid polypeptide reads, in one-letter code: MANHSSAKKAARQTVKRTLINKKRSSAIKTFIKKVAHEISLGNKENANLALSVAQSKIMQGVKKNIIKLNTASRKISRLSKQIKSLNESK.

Belongs to the bacterial ribosomal protein bS20 family.

Binds directly to 16S ribosomal RNA. This chain is Small ribosomal subunit protein bS20, found in Rickettsia felis (strain ATCC VR-1525 / URRWXCal2) (Rickettsia azadi).